Consider the following 204-residue polypeptide: Methyl-CpG-binding domain protein 3-like 2B (204 aa).

Residues 126-137 show a composition bias toward basic and acidic residues; that stretch reads SLDRAGAERVRS. Positions 126 to 145 are disordered; the sequence is SLDRAGAERVRSPLEPTPGR.

Belongs to the MBD3L family.

This Homo sapiens (Human) protein is Methyl-CpG-binding domain protein 3-like 2B.